Reading from the N-terminus, the 559-residue chain is NAD(P)H-quinone oxidoreductase chain 4-2 (559 aa).

The next 14 membrane-spanning stretches (helical) occupy residues 5–25 (FPWLTTMIALPLVAALFIPLI), 35–55 (WYALGVGLADFVLMSYVFWTN), 86–106 (ISMPLVLLAGLVTTLSIFAAW), 114–134 (LFYFLMLVLYAAQIGVFVAQD), 136–156 (LLLFIMWELELVPVYLLVCIW), 168–188 (FLLYTAAASVFILVAALGLAF), 207–227 (IALELFLYAGLLIAFGVKLAI), 242–262 (SAPVSMILAGVLLKMGGYGLI), 274–294 (VYFAPILVILGVVNIIYGGFS), 310–330 (VSHMGFVLLGIASFTDLGISG), 331–351 (AMLQMLSHGLIAAVLFFLAGV), 374–394 (VFALFTMGAMASLALPGMSGF), 417–437 (VTVFLAAVGLVLTPIYLLSML), and 488–508 (VFIAACFLLPIIAVGLYPKLA).

The protein belongs to the complex I subunit 4 family.

It is found in the cellular thylakoid membrane. It catalyses the reaction a plastoquinone + NADH + (n+1) H(+)(in) = a plastoquinol + NAD(+) + n H(+)(out). The enzyme catalyses a plastoquinone + NADPH + (n+1) H(+)(in) = a plastoquinol + NADP(+) + n H(+)(out). In terms of biological role, NDH-1 shuttles electrons from NAD(P)H, via FMN and iron-sulfur (Fe-S) centers, to quinones in the respiratory chain. The immediate electron acceptor for the enzyme in this species is believed to be plastoquinone. Couples the redox reaction to proton translocation (for every two electrons transferred, four hydrogen ions are translocated across the cytoplasmic membrane), and thus conserves the redox energy in a proton gradient. In Synechocystis sp. (strain ATCC 27184 / PCC 6803 / Kazusa), this protein is NAD(P)H-quinone oxidoreductase chain 4-2 (ndhD2).